Here is a 371-residue protein sequence, read N- to C-terminus: Repetitive proline-rich cell wall protein 2 (371 aa).

The N-terminal stretch at 1-22 (MASSNLLVLLLFALFAIPRGLA) is a signal peptide. A run of 66 repeats spans residues 32-36 (PPVYK), 37-41 (PPVEK), 42-46 (PPVYK), 47-51 (PPVEK), 52-56 (PPVYK), 57-61 (PPVEK), 62-66 (PPVYK), 67-71 (PPVEK), 72-76 (PPVYK), 77-81 (PPVEK), 82-86 (PPVYK), 87-91 (PPVEK), 92-96 (PPVYK), 97-101 (PPVEK), 102-106 (PPVYK), 107-111 (PPVEK), 112-116 (PPVYK), 117-121 (PPVEK), 122-126 (PPVYK), 127-131 (PPVEK), 132-136 (PPVYK), 137-141 (PPVEK), 142-146 (PPVYK), 147-151 (PPVEK), 152-156 (PPVYK), 157-161 (PPVEK), 162-166 (PPVYK), 167-171 (PPVEK), 172-176 (PPVYK), 177-181 (PPVEK), 182-186 (PPVYK), 187-191 (PPVEK), 192-196 (PPVYK), 197-201 (PPVEK), 202-206 (PPVYK), 207-211 (PPVEK), 212-216 (PPVYK), 217-221 (PPVEK), 222-226 (PPVYK), 227-231 (PPVEK), 232-236 (PPIYK), 237-241 (PPVEK), 242-246 (PPVYK), 247-251 (PPVEK), 252-256 (PPVYK), 257-261 (PPVEK), 262-266 (PPIYK), 267-271 (PPVEK), 272-276 (PPVYK), 277-281 (PPVEK), 282-286 (PPVYK), 287-291 (PPVEK), 292-296 (PPVYK), 297-301 (PPVEK), 302-306 (PPVYK), 307-311 (PPVEK), 312-316 (PPVYK), 317-321 (PPVYK), 322-326 (PPVYK), 327-331 (PPVEK), 332-336 (PPVYK), 337-341 (PPVYK), 342-346 (PPVEK), 347-351 (PPVYK), 352-356 (PPVYK), and 357-361 (PPVEK). Positions 32–366 (PPVYKPPVEK…PPVEKPPVYG (335 aa)) are 67 X 5 AA approximate tandem repeats of P-P-[IV]-[EY]-K. The interval 49 to 317 (VEKPPVYKPP…PVEKPPVYKP (269 aa)) is disordered. The disordered stretch occupies residues 339–371 (VYKPPVEKPPVYKPPVYKPPVEKPPVYGPPHHP). The stretch at 362-366 (PPVYG) is one 67; approximate repeat.

Belongs to the plant proline-rich protein superfamily. ENOD12 family. As to expression, expressed in hypocotyls, roots and mature root nodules.

It localises to the secreted. The protein resides in the cell wall. Functionally, this is a developmentally regulated putative cell wall protein. The chain is Repetitive proline-rich cell wall protein 2 (PRP2) from Medicago truncatula (Barrel medic).